We begin with the raw amino-acid sequence, 254 residues long: MRSLDYAKVITKLVSFIQEKVEESNVKGVILGISGGVDSATVAYLAARAIGKEKVLGLVMPYHINRDVEDALLVCNNLGINYKVINIKSIVNEFEKNLDFELNNVSRGNIMSRTRMILLYAHANSKNYLVLGTSNRSEFLTGYFTKWGDSASDYAPLINLYKTEVWNIARILGVPNEIINKKPSAGLWEGQTDEKDLGITYKLLDEILYRLVDLKMKKENIARELNIPLNKVEYVESLIKKSEHKRKLPIGPEI.

32-39 lines the ATP pocket; sequence GISGGVDS. Asp38 contributes to the Mg(2+) binding site. Arg113 serves as a coordination point for deamido-NAD(+). Residue Thr133 participates in ATP binding. Glu138 is a binding site for Mg(2+). Lys146 and Asp153 together coordinate deamido-NAD(+). ATP contacts are provided by Lys162 and Ser184. 244–245 contacts deamido-NAD(+); that stretch reads HK.

The protein belongs to the NAD synthetase family. Homodimer.

The enzyme catalyses deamido-NAD(+) + NH4(+) + ATP = AMP + diphosphate + NAD(+) + H(+). The protein operates within cofactor biosynthesis; NAD(+) biosynthesis; NAD(+) from deamido-NAD(+) (ammonia route): step 1/1. Functionally, catalyzes the ATP-dependent amidation of deamido-NAD to form NAD. Uses ammonia as a nitrogen source. This Thermococcus sibiricus (strain DSM 12597 / MM 739) protein is NH(3)-dependent NAD(+) synthetase.